The sequence spans 219 residues: Probable 3-beta-hydroxysteroid-Delta(8),Delta(7)-isomerase (219 aa).

Transmembrane regions (helical) follow at residues 29-49 (ILVPYLATSLFLLLAVWLISG), 62-82 (LMCWWAFTGLTHIIIEGTFVF), 119-139 (VEGITAVLEGPASLLAVYAIA), and 181-201 (FWAYFIGANSSWVVIPTMIAI). The EXPERA domain maps to 58-200 (TDRWLMCWWA…SWVVIPTMIA (143 aa)).

Belongs to the EBP family.

The protein resides in the endoplasmic reticulum membrane. It catalyses the reaction lathosterol = 5alpha-cholest-8-en-3beta-ol. The protein operates within steroid biosynthesis; sterol biosynthesis. Catalyzes the conversion of Delta(8)-sterols to their corresponding Delta(7)-isomers. This is Probable 3-beta-hydroxysteroid-Delta(8),Delta(7)-isomerase from Oryza sativa subsp. japonica (Rice).